Consider the following 876-residue polypeptide: Leucine--tRNA ligase (876 aa).

A 'HIGH' region motif is present at residues Pro42–His52. Residues Lys634 to Ser638 carry the 'KMSKS' region motif. Lys637 contributes to the ATP binding site.

This sequence belongs to the class-I aminoacyl-tRNA synthetase family.

It is found in the cytoplasm. It carries out the reaction tRNA(Leu) + L-leucine + ATP = L-leucyl-tRNA(Leu) + AMP + diphosphate. In Variovorax paradoxus (strain S110), this protein is Leucine--tRNA ligase.